We begin with the raw amino-acid sequence, 120 residues long: Flagellar protein FliT (120 aa).

Positions 1–50 are required for homodimerization; the sequence is MERHQHLLSEYQQILTLSEQMLMLATVENWNTLVDLEMTYLKAVENTANI. A fliD binding region spans residues 60 to 98; the sequence is LQELLRQKLRSILENEIEIKRLLQRRLDKLSELVGQSTR.

The protein belongs to the FliT family. In terms of assembly, homodimer. Interacts with FliD and FlhC.

It is found in the cytoplasm. Its subcellular location is the cytosol. In terms of biological role, dual-function protein that regulates the transcription of class 2 flagellar operons and that also acts as an export chaperone for the filament-capping protein FliD. As a transcriptional regulator, acts as an anti-FlhDC factor; it directly binds FlhC, thus inhibiting the binding of the FlhC/FlhD complex to class 2 promoters, resulting in decreased expression of class 2 flagellar operons. As a chaperone, effects FliD transition to the membrane by preventing its premature polymerization, and by directing it to the export apparatus. This is Flagellar protein FliT from Yersinia pestis (strain Pestoides F).